A 202-amino-acid polypeptide reads, in one-letter code: MPPANPHLNHTGGCTKTEEEEAASSEEDSGSFHGSGVCKWFNVRMGFGFLSMTHREGICLDSPVDVFVHQSKLHMEGFRSLKEGEAVEFTFKRSSKGLESLQVTGPGGAPCVGSEKKPKGTQKRRSKGDRCFNCGGPNHHAKECQLPPQPKKCHFCQSISHMVANCPIKAQQLSPGSQGKSTTSTGEEEDMSHTPLLPESTD.

Disordered regions lie at residues 1–33 (MPPANPHLNHTGGCTKTEEEEAASSEEDSGSFH) and 100–128 (SLQVTGPGGAPCVGSEKKPKGTQKRRSKG). Over residues 18 to 29 (EEEEAASSEEDS) the composition is skewed to acidic residues. One can recognise a CSD domain in the interval 33 to 106 (HGSGVCKWFN…GLESLQVTGP (74 aa)). The tract at residues 107 to 130 (GGAPCVGSEKKPKGTQKRRSKGDR) is flexible linker. CCHC-type zinc fingers lie at residues 129–146 (DRCFNCGGPNHHAKECQL) and 151–168 (KKCHFCQSISHMVANCPI). Zn(2+) contacts are provided by Cys131, Cys134, His139, Cys144, Cys153, Cys156, His161, and Cys166. The segment at 170–202 (AQQLSPGSQGKSTTSTGEEEDMSHTPLLPESTD) is disordered. Positions 171-185 (QQLSPGSQGKSTTST) are enriched in polar residues. Ser174 carries the phosphoserine modification.

The protein belongs to the lin-28 family. Monomer.

Its subcellular location is the cytoplasm. It localises to the rough endoplasmic reticulum. It is found in the P-body. The protein resides in the stress granule. The protein localises to the nucleus. Its subcellular location is the nucleolus. Functionally, RNA-binding protein that inhibits processing of pre-let-7 miRNAs and regulates translation of mRNAs that control developmental timing, pluripotency and metabolism. Seems to recognize a common structural G-quartet (G4) feature in its miRNA and mRNA targets. 'Translational enhancer' that drives specific mRNAs to polysomes and increases the efficiency of protein synthesis. Its association with the translational machinery and target mRNAs results in an increased number of initiation events per molecule of mRNA and, indirectly, in mRNA stabilization. Suppressor of microRNA (miRNA) biogenesis, including that of let-7. Binds specific target miRNA precursors (pre-miRNAs), recognizing an 5'-GGAG-3' motif found in their terminal loop, and recruits uridylyltransferase. This results in the terminal uridylation of target pre-miRNAs. Uridylated pre-miRNAs fail to be processed by Dicer and undergo degradation. Localized to the periendoplasmic reticulum area, binds to a large number of spliced mRNAs and inhibits the translation of mRNAs destined for the ER, reducing the synthesis of transmembrane proteins, ER or Golgi lumen proteins, and secretory proteins. Binds to and enhances the translation of mRNAs for several metabolic enzymes, increasing glycolysis and oxidative phosphorylation. Which, with the let-7 repression may enhance tissue repair in adult tissue. This Danio rerio (Zebrafish) protein is Protein lin-28 homolog A (lin28a).